Here is a 223-residue protein sequence, read N- to C-terminus: Small ribosomal subunit protein uS3 (223 aa).

The KH type-2 domain occupies 39–117; the sequence is IREHLRKKPS…RPELNAKLVA (79 aa).

Belongs to the universal ribosomal protein uS3 family. Part of the 30S ribosomal subunit. Forms a tight complex with proteins S10 and S14.

Binds the lower part of the 30S subunit head. Binds mRNA in the 70S ribosome, positioning it for translation. The chain is Small ribosomal subunit protein uS3 from Chlamydia felis (strain Fe/C-56) (Chlamydophila felis).